The following is a 429-amino-acid chain: Methanol:N,N-dimethyl-4-nitrosoaniline oxidoreductase (429 aa).

It belongs to the iron-containing alcohol dehydrogenase family. As to quaternary structure, homodecamer. Mg(2+) serves as cofactor. The cofactor is Zn(2+). NADPH is required as a cofactor.

It catalyses the reaction methanol + A = formaldehyde + AH2. Its activity is regulated as follows. Inhibited by azide and hydrazine. Catalyzes the oxidation of methanol to yield formaldehyde. While the in vivo electron acceptor is not known, N,N-dimethyl-4-nitrosoaniline (NDMA) can serve this function in vitro and is reduced to 4-(hydroxylamino)-N,N-dimethylaniline. It can also use various other primary alcohols, polyols and formaldehyde. In addition, MNO is able to produce methylformate from methanol plus formaldehyde, and possesses a formaldehyde dismutase and a NADH-dependent formaldehyde reductase activity. This is Methanol:N,N-dimethyl-4-nitrosoaniline oxidoreductase (mno) from Amycolatopsis methanolica.